A 295-amino-acid polypeptide reads, in one-letter code: Sulfotransferase 1A1 (295 aa).

A 3'-phosphoadenylyl sulfate-binding site is contributed by 48–53 (KSGTTW). 106–108 (KTH) provides a ligand contact to substrate. The active-site Proton acceptor is His-108. 3'-phosphoadenylyl sulfate-binding positions include Arg-130, Ser-138, Tyr-193, 227 to 232 (TSFKEM), and 255 to 259 (FMRKG). Ser-138 carries the post-translational modification Phosphoserine.

Belongs to the sulfotransferase 1 family. As to quaternary structure, homodimer. Liver, lung, adrenal, brain, platelets and skin.

Its subcellular location is the cytoplasm. The enzyme catalyses a phenol + 3'-phosphoadenylyl sulfate = an aryl sulfate + adenosine 3',5'-bisphosphate + H(+). It catalyses the reaction 17beta-estradiol + 3'-phosphoadenylyl sulfate = 17beta-estradiol 3-sulfate + adenosine 3',5'-bisphosphate + H(+). It carries out the reaction 4-ethylphenol + 3'-phosphoadenylyl sulfate = 4-ethylphenyl sulfate + adenosine 3',5'-bisphosphate + H(+). The catalysed reaction is 4-nitrophenol + 3'-phosphoadenylyl sulfate = 4-nitrophenyl sulfate + adenosine 3',5'-bisphosphate. The enzyme catalyses dopamine + 3'-phosphoadenylyl sulfate = dopamine 3-O-sulfate + adenosine 3',5'-bisphosphate + H(+). It catalyses the reaction dopamine + 3'-phosphoadenylyl sulfate = dopamine 4-O-sulfate + adenosine 3',5'-bisphosphate + H(+). It carries out the reaction 3,3',5-triiodo-L-thyronine + 3'-phosphoadenylyl sulfate = 3,3',5-triiodo-L-thyronine sulfate + adenosine 3',5'-bisphosphate + H(+). The catalysed reaction is 3,3',5'-triiodo-L-thyronine + 3'-phosphoadenylyl sulfate = 3,3',5'-triiodo-L-thyronine sulfate + adenosine 3',5'-bisphosphate + H(+). The enzyme catalyses 3,3'-diiodo-L-thyronine + 3'-phosphoadenylyl sulfate = 3,3'-diiodo-L-thyronine sulfate + adenosine 3',5'-bisphosphate + H(+). It catalyses the reaction L-thyroxine + 3'-phosphoadenylyl sulfate = L-thyroxine sulfate + adenosine 3',5'-bisphosphate + H(+). In terms of biological role, sulfotransferase that utilizes 3'-phospho-5'-adenylyl sulfate (PAPS) as sulfonate donor to catalyze the sulfate conjugation of a wide variety of acceptor molecules bearing a hydroxyl or an amine group. Sulfonation increases the water solubility of most compounds, and therefore their renal excretion, but it can also result in bioactivation to form active metabolites. Displays broad substrate specificity for small phenolic compounds. Plays an important role in the sulfonation of endogenous molecules such as steroid hormones. Mediates the sulfate conjugation of a variety of xenobiotics, including the drugs acetaminophen and minoxidil. Mediates also the metabolic activation of carcinogenic N-hydroxyarylamines leading to highly reactive intermediates capable of forming DNA adducts, potentially resulting in mutagenesis. May play a role in gut microbiota-host metabolic interaction. O-sulfonates 4-ethylphenol (4-EP), a dietary tyrosine-derived metabolite produced by gut bacteria. The product 4-EPS crosses the blood-brain barrier and may negatively regulate oligodendrocyte maturation and myelination, affecting the functional connectivity of different brain regions associated with the limbic system. Catalyzes the sulfate conjugation of dopamine. Catalyzes the sulfation of T4 (L-thyroxine/3,5,3',5'-tetraiodothyronine), T3 (3,5,3'-triiodothyronine), rT3 (3,3',5'-triiodothyronine) and 3,3'-T2 (3,3'-diiodothyronine), with a substrate preference of 3,3'-T2 &gt; rT3 &gt; T3 &gt; T4. The protein is Sulfotransferase 1A1 (SULT1A1) of Homo sapiens (Human).